A 103-amino-acid chain; its full sequence is MSIYVGNLSYDVTEESLNAVFAEYGSVKRVQLPVDRETGRVRGFGFVEMGSDAEETAAIEALDGAEWMGRDLKVNKAKPREDRGGSRGSFGGNRSNNNFRNRY.

The RRM domain maps to 2–79 (SIYVGNLSYD…RDLKVNKAKP (78 aa)). Residues 74–85 (VNKAKPREDRGG) are compositionally biased toward basic and acidic residues. Positions 74 to 103 (VNKAKPREDRGGSRGSFGGNRSNNNFRNRY) are disordered. Low complexity predominate over residues 92 to 103 (GNRSNNNFRNRY).

This chain is Putative RNA-binding protein RbpB (rbpB), found in Nostoc sp. (strain PCC 7120 / SAG 25.82 / UTEX 2576).